Here is a 698-residue protein sequence, read N- to C-terminus: Elongation factor G 2 (698 aa).

The region spanning 8-290 is the tr-type G domain; the sequence is ERYRNIGIMA…AVVDYLPSPV (283 aa). GTP contacts are provided by residues 17–24, 88–92, and 142–145; these read AHIDAGKT, DTPGH, and NKMD.

Belongs to the TRAFAC class translation factor GTPase superfamily. Classic translation factor GTPase family. EF-G/EF-2 subfamily.

It is found in the cytoplasm. Functionally, catalyzes the GTP-dependent ribosomal translocation step during translation elongation. During this step, the ribosome changes from the pre-translocational (PRE) to the post-translocational (POST) state as the newly formed A-site-bound peptidyl-tRNA and P-site-bound deacylated tRNA move to the P and E sites, respectively. Catalyzes the coordinated movement of the two tRNA molecules, the mRNA and conformational changes in the ribosome. This is Elongation factor G 2 from Methylococcus capsulatus (strain ATCC 33009 / NCIMB 11132 / Bath).